The sequence spans 330 residues: Phytanoyl-CoA hydroxylase-interacting protein (330 aa).

The 110-residue stretch at 6–115 (TPHSIEINNI…ETVEFCTGDY (110 aa)) folds into the Fibronectin type-III domain. 2 N-linked (GlcNAc...) asparagine glycosylation sites follow: N14 and N325.

This sequence belongs to the PHYHIP family. Interacts with PHYH and ADGRB1. In terms of tissue distribution, highly expressed in the brain.

Its interaction with PHYH suggests a role in the development of the central system. In Mus musculus (Mouse), this protein is Phytanoyl-CoA hydroxylase-interacting protein (Phyhip).